A 685-amino-acid polypeptide reads, in one-letter code: Sodium/glucose cotransporter 4 (685 aa).

The disordered stretch occupies residues Met1–Glu20. The Extracellular portion of the chain corresponds to Met1 to Tyr32. The helical transmembrane segment at Asp33 to Ile53 threads the bilayer. Residues Arg54–Thr71 are Cytoplasmic-facing. The chain crosses the membrane as a helical span at residues Trp72–Gly94. Topologically, residues Thr95–Ala110 are extracellular. The chain crosses the membrane as a helical span at residues Thr111–Val131. At Thr132–Leu153 the chain is on the cytoplasmic side. Residues Ser154 to Ile174 traverse the membrane as a helical segment. At Gln175–Thr186 the chain is on the extracellular side. A helical membrane pass occupies residues Val187–Tyr207. Residues Thr208 to Thr213 are Cytoplasmic-facing. A helical transmembrane segment spans residues Val214 to Tyr234. Residues Pro235–Asn271 lie on the Extracellular side of the membrane. A glycan (N-linked (GlcNAc...) asparagine) is linked at Asn247. The chain crosses the membrane as a helical span at residues Gly272 to Cys292. Over Thr293 to Gly313 the chain is Cytoplasmic. Residues Ser314–Ile334 form a helical membrane-spanning segment. The Extracellular portion of the chain corresponds to Ser335–Arg379. Residues Gly380–Ser402 form a helical membrane-spanning segment. Topologically, residues Thr403–Met423 are cytoplasmic. Residues Val424 to Ile444 traverse the membrane as a helical segment. Residues Gln445–Tyr455 are Extracellular-facing. A helical transmembrane segment spans residues Ile456–Phe476. The Cytoplasmic portion of the chain corresponds to Cys477–Pro483. A helical transmembrane segment spans residues Gly484 to Phe504. At Ser505–Tyr526 the chain is on the extracellular side. The helical transmembrane segment at Leu527–Phe547 threads the bilayer. The Cytoplasmic portion of the chain corresponds to Thr548–Arg664. Residues Val577 to Gly616 are disordered. Residues Val665–Ala685 form a helical membrane-spanning segment.

Belongs to the sodium:solute symporter (SSF) (TC 2.A.21) family.

It is found in the cell membrane. It carries out the reaction D-mannose(out) + n Na(+)(out) = D-mannose(in) + n Na(+)(in). In terms of biological role, electrogenic Na(+)-coupled sugar symporter that may play a primary role in D-mannose and possibly D-fructose and D-glucose transport at the plasma membrane. Transporter activity is driven by a transmembrane Na(+) electrochemical gradient set by the Na(+)/K(+) pump. Exclusively recognizes sugar substrates having a pyranose ring with an axial hydroxyl group on carbon 2. This chain is Sodium/glucose cotransporter 4 (Slc5a9), found in Mus musculus (Mouse).